Reading from the N-terminus, the 414-residue chain is Argininosuccinate synthase (414 aa).

ATP contacts are provided by residues 9–17 (AYSGGLDTS) and A35. Residues Y86 and S91 each contribute to the L-citrulline site. 114 to 122 (SHGATGKGN) is a binding site for ATP. T118, N122, and D123 together coordinate L-aspartate. Position 122 (N122) interacts with L-citrulline. Residues R126, S179, S188, E269, and Y281 each coordinate L-citrulline.

Belongs to the argininosuccinate synthase family. As to quaternary structure, homotetramer.

It localises to the cytoplasm. The protein localises to the cytosol. It catalyses the reaction L-citrulline + L-aspartate + ATP = 2-(N(omega)-L-arginino)succinate + AMP + diphosphate + H(+). It participates in amino-acid biosynthesis; L-arginine biosynthesis; L-arginine from L-ornithine and carbamoyl phosphate: step 2/3. The protein operates within nitrogen metabolism; urea cycle; (N(omega)-L-arginino)succinate from L-aspartate and L-citrulline: step 1/1. Functionally, one of the enzymes of the urea cycle, the metabolic pathway transforming neurotoxic amonia produced by protein catabolism into inocuous urea in the liver of ureotelic animals. Catalyzes the formation of arginosuccinate from aspartate, citrulline and ATP and together with ASL it is responsible for the biosynthesis of arginine in most body tissues. This is Argininosuccinate synthase from Danio rerio (Zebrafish).